Here is a 684-residue protein sequence, read N- to C-terminus: Proprotein convertase subtilisin/kexin type 9 (684 aa).

Positions 1 to 28 (MGTVSSRRLWWPLPLLLLLLLGPPGARA) are cleaved as a signal peptide. A propeptide spanning residues 29 to 151 (QEDDDGDYEE…IEEDSSVFAQ (123 aa)) is cleaved from the precursor. Tyr-36 bears the Sulfotyrosine mark. Position 45 is a phosphoserine (Ser-45). The region spanning 75–148 (TYVVVLKDSD…VDYIEEDSSV (74 aa)) is the Inhibitor I9 domain. One can recognise a Peptidase S8 domain in the interval 154–460 (PWNLERITPA…GWQLFCRTVW (307 aa)). Catalysis depends on charge relay system residues Asp-185 and His-225. Cystine bridges form between Cys-222-Cys-254 and Cys-322-Cys-357. The active-site Charge relay system is Ser-385. The C-terminal domain stretch occupies residues 451–684 (GWQLFCRTVW…AICCRSRHLA (234 aa)). Disulfide bonds link Cys-456–Cys-526, Cys-476–Cys-525, and Cys-485–Cys-508. An N-linked (GlcNAc...) asparagine glycan is attached at Asn-532. 6 disulfides stabilise this stretch: Cys-533/Cys-600, Cys-551/Cys-599, Cys-561/Cys-587, Cys-607/Cys-678, Cys-625/Cys-677, and Cys-634/Cys-653.

Belongs to the peptidase S8 family. In terms of assembly, monomer. Can self-associate to form dimers and higher multimers which may have increased LDLR degrading activity. The precursor protein but not the mature protein may form multimers. Interacts with APOB, VLDLR, LRP8/APOER2 and BACE1. The full-length immature form (pro-PCSK9) interacts with SCNN1A, SCNN1B and SCNN1G. The pro-PCSK9 form (via C-terminal domain) interacts with LDLR. Interacts (via the C-terminal domain) with ANXA2 (via repeat Annexin 1); the interaction inhibits the degradation of LDLR. It depends on Ca(2+) as a cofactor. Cleavage by furin and PCSK5 generates a truncated inactive protein that is unable to induce LDLR degradation. Post-translationally, undergoes autocatalytic cleavage in the endoplasmic reticulum to release the propeptide from the N-terminus and the cleavage of the propeptide is strictly required for its maturation and activation. The cleaved propeptide however remains associated with the catalytic domain through non-covalent interactions, preventing potential substrates from accessing its active site. As a result, it is secreted from cells as a propeptide-containing, enzymatically inactive protein. In terms of processing, phosphorylation protects the propeptide against proteolysis.

The protein localises to the cytoplasm. It localises to the secreted. Its subcellular location is the endosome. It is found in the lysosome. The protein resides in the cell surface. The protein localises to the endoplasmic reticulum. It localises to the golgi apparatus. Its activity is regulated as follows. Its proteolytic activity is autoinhibited by the non-covalent binding of the propeptide to the catalytic domain. Inhibited by EGTA. Crucial player in the regulation of plasma cholesterol homeostasis. Binds to low-density lipid receptor family members: low density lipoprotein receptor (LDLR), very low density lipoprotein receptor (VLDLR), apolipoprotein E receptor (LRP1/APOER) and apolipoprotein receptor 2 (LRP8/APOER2), and promotes their degradation in intracellular acidic compartments. Acts via a non-proteolytic mechanism to enhance the degradation of the hepatic LDLR through a clathrin LDLRAP1/ARH-mediated pathway. May prevent the recycling of LDLR from endosomes to the cell surface or direct it to lysosomes for degradation. Can induce ubiquitination of LDLR leading to its subsequent degradation. Inhibits intracellular degradation of APOB via the autophagosome/lysosome pathway in a LDLR-independent manner. Involved in the disposal of non-acetylated intermediates of BACE1 in the early secretory pathway. Inhibits epithelial Na(+) channel (ENaC)-mediated Na(+) absorption by reducing ENaC surface expression primarily by increasing its proteasomal degradation. Regulates neuronal apoptosis via modulation of LRP8/APOER2 levels and related anti-apoptotic signaling pathways. The protein is Proprotein convertase subtilisin/kexin type 9 (PCSK9) of Plecturocebus moloch (Dusky titi monkey).